We begin with the raw amino-acid sequence, 146 residues long: Ferredoxin-thioredoxin reductase catalytic chain, chloroplastic (146 aa).

The transit peptide at 1–31 (MNLQAVSCSFGFLSSPLGVTPRTSFRRFVIR) directs the protein to the chloroplast. C85 provides a ligand contact to [4Fe-4S] cluster. C87 serves as the catalytic Nucleophile. The cysteines at positions 87 and 117 are disulfide-linked. Residues C104, C106, and C115 each contribute to the [4Fe-4S] cluster site.

The protein belongs to the ferredoxin thioredoxin reductase beta subunit family. Heterodimer of subunit A (variable subunit) and subunit B (catalytic subunit). Heterodimeric FTR forms a complex with ferredoxin and thioredoxin. [4Fe-4S] cluster is required as a cofactor.

It localises to the plastid. The protein resides in the chloroplast. The enzyme catalyses [thioredoxin]-disulfide + 2 reduced [2Fe-2S]-[ferredoxin] + 2 H(+) = [thioredoxin]-dithiol + 2 oxidized [2Fe-2S]-[ferredoxin]. Its function is as follows. Catalytic subunit of the ferredoxin-thioredoxin reductase (FTR), which catalyzes the two-electron reduction of thioredoxins by the electrons provided by reduced ferredoxin. The sequence is that of Ferredoxin-thioredoxin reductase catalytic chain, chloroplastic from Arabidopsis thaliana (Mouse-ear cress).